A 91-amino-acid polypeptide reads, in one-letter code: MNVKAIANQXSVAPRKTRLVADLIRGKHVREAQAILMFTPKAASPIVSKLLKSAVANAVHNFSLKEEELYVKEIFVNEGLRLTRLLPRAKG.

The protein belongs to the universal ribosomal protein uL22 family. Part of the 50S ribosomal subunit.

In terms of biological role, this protein binds specifically to 23S rRNA; its binding is stimulated by other ribosomal proteins, e.g. L4, L17, and L20. It is important during the early stages of 50S assembly. It makes multiple contacts with different domains of the 23S rRNA in the assembled 50S subunit and ribosome. The globular domain of the protein is located near the polypeptide exit tunnel on the outside of the subunit, while an extended beta-hairpin is found that lines the wall of the exit tunnel in the center of the 70S ribosome. This Clover yellow edge phytoplasma protein is Large ribosomal subunit protein uL22 (rplV).